A 236-amino-acid polypeptide reads, in one-letter code: Concanavalin-Ma (236 aa).

Mn(2+) contacts are provided by Glu-8 and Asp-10. Ca(2+) contacts are provided by Asp-10, Tyr-12, Asn-14, and Asp-19. Position 12 (Tyr-12) interacts with a carbohydrate. The Mn(2+) site is built by Asp-19 and His-24. 98–99 lines the a carbohydrate pocket; it reads LY. Asp-207 is a binding site for Ca(2+). Arg-227 contributes to the a carbohydrate binding site.

This sequence belongs to the leguminous lectin family. As to quaternary structure, homotetramer.

Glucose/D-mannose specific lectin. In Canavalia rosea (Beach bean), this protein is Concanavalin-Ma.